A 159-amino-acid chain; its full sequence is Riboflavin kinase (159 aa).

38-43 (GLGEGR) contacts CDP. Mg(2+)-binding residues include T67 and N69. FMN contacts are provided by T126 and E134. 139–142 (HKLR) contacts CDP.

Belongs to the archaeal riboflavin kinase family. Requires Mg(2+) as cofactor.

It carries out the reaction riboflavin + CTP = CDP + FMN + H(+). It functions in the pathway cofactor biosynthesis; FMN biosynthesis; FMN from riboflavin (CTP route): step 1/1. Catalyzes the CTP-dependent phosphorylation of riboflavin (vitamin B2) to form flavin mononucleotide (FMN). The protein is Riboflavin kinase of Sulfolobus acidocaldarius (strain ATCC 33909 / DSM 639 / JCM 8929 / NBRC 15157 / NCIMB 11770).